A 305-amino-acid polypeptide reads, in one-letter code: ATP synthase subunit gamma, mitochondrial (305 aa).

Belongs to the ATPase gamma chain family. F-type ATPases have 2 components, F(1) - the catalytic core - and F(o) - the membrane proton channel. F(1) has five subunits: alpha(3), beta(3), gamma(1), delta(1), epsilon(1), plus the additional subunit P18 (Tb427.05.1710) that is not present in F(1)F(o) ATP synthase from metazoa. Subunit P18 (Tb927.5.1710) interacts with the alpha subunit with a 1:1 stoichiometry; the interaction is direct. Subunit gamma is part of the central stalk. F(o) has three main subunits: a, b and c. The trypanosomal ATPase complex contains additional subunits that are not present in the F(1)F(o) ATP synthase from metazoa.

The protein resides in the mitochondrion. It is found in the mitochondrion inner membrane. In terms of biological role, mitochondrial membrane ATP synthase (F(1)F(o) ATP synthase) produces ATP from ADP in the presence of a proton gradient across the membrane which is generated by electron transport complexes of the respiratory chain. F-type ATPases consist of two structural domains, F(1) - containing the extramembraneous catalytic core, and F(o) - containing the membrane proton channel, linked together by a central stalk and a peripheral stalk. During catalysis, ATP synthesis in the catalytic domain of F(1) is coupled via a rotary mechanism of the central stalk subunits to proton translocation. Subunits alpha and beta form the catalytic core in F(1). Rotation of the central stalk against the surrounding alpha(3)beta(3) subunits leads to hydrolysis of ATP in three separate catalytic sites on the beta subunits. Contrary to the procyclic, insect form that requires F(1)F(o) ATP synthase for ATP synthesis, the bloodstream form relies on ATP hydrolysis by F(1)F(o) ATP synthase to maintain its mitochondrial membrane potential. In Trypanosoma brucei brucei, this protein is ATP synthase subunit gamma, mitochondrial.